The following is an 883-amino-acid chain: Phosphoenolpyruvate carboxylase (883 aa).

Catalysis depends on residues His-138 and Lys-546.

It belongs to the PEPCase type 1 family. The cofactor is Mg(2+).

The enzyme catalyses oxaloacetate + phosphate = phosphoenolpyruvate + hydrogencarbonate. Functionally, forms oxaloacetate, a four-carbon dicarboxylic acid source for the tricarboxylic acid cycle. The protein is Phosphoenolpyruvate carboxylase of Escherichia coli (strain 55989 / EAEC).